Consider the following 95-residue polypeptide: Large ribosomal subunit protein bL21 (95 aa).

Belongs to the bacterial ribosomal protein bL21 family. As to quaternary structure, part of the 50S ribosomal subunit. Contacts protein L20.

Functionally, this protein binds to 23S rRNA in the presence of protein L20. This chain is Large ribosomal subunit protein bL21, found in Rubrobacter xylanophilus (strain DSM 9941 / JCM 11954 / NBRC 16129 / PRD-1).